Here is a 65-residue protein sequence, read N- to C-terminus: MAKKGTRIVVTLECTECRSAPASEKRSPGVSRYTTEKNRRNTSDRLELKKFCPQLNKMTIHKEIK.

The tract at residues 20 to 42 is disordered; it reads APASEKRSPGVSRYTTEKNRRNT.

It belongs to the bacterial ribosomal protein bL33 family.

The chain is Large ribosomal subunit protein bL33 from Prochlorococcus marinus (strain SARG / CCMP1375 / SS120).